Consider the following 263-residue polypeptide: DNA repair protein RecO (263 aa).

The interval 243–263 (DRKETARETVPTSDGTASNAV) is disordered. Positions 252-263 (VPTSDGTASNAV) are enriched in polar residues.

This sequence belongs to the RecO family.

In terms of biological role, involved in DNA repair and RecF pathway recombination. This Neisseria meningitidis serogroup C / serotype 2a (strain ATCC 700532 / DSM 15464 / FAM18) protein is DNA repair protein RecO.